Here is a 310-residue protein sequence, read N- to C-terminus: tRNA-cytidine(32) 2-sulfurtransferase (310 aa).

The PP-loop motif signature appears at serine 47–serine 52. Residues cysteine 122, cysteine 125, and cysteine 213 each coordinate [4Fe-4S] cluster.

This sequence belongs to the TtcA family. In terms of assembly, homodimer. Mg(2+) is required as a cofactor. The cofactor is [4Fe-4S] cluster.

Its subcellular location is the cytoplasm. It carries out the reaction cytidine(32) in tRNA + S-sulfanyl-L-cysteinyl-[cysteine desulfurase] + AH2 + ATP = 2-thiocytidine(32) in tRNA + L-cysteinyl-[cysteine desulfurase] + A + AMP + diphosphate + H(+). Its pathway is tRNA modification. Its function is as follows. Catalyzes the ATP-dependent 2-thiolation of cytidine in position 32 of tRNA, to form 2-thiocytidine (s(2)C32). The sulfur atoms are provided by the cysteine/cysteine desulfurase (IscS) system. In Haemophilus influenzae (strain PittEE), this protein is tRNA-cytidine(32) 2-sulfurtransferase.